The chain runs to 345 residues: Eukaryotic translation initiation factor 3 subunit F (345 aa).

An MPN domain is found at 30–166 (VVIQPQAIFS…TRAYISAPVG (137 aa)). Residues 310-345 (EGASAEAGAQRGQRGGKGGRGGQQRTQERASEEVRA) are disordered. Residues 312–321 (ASAEAGAQRG) show a composition bias toward low complexity. A compositionally biased stretch (gly residues) spans 322 to 331 (QRGGKGGRGG). The span at 335 to 345 (TQERASEEVRA) shows a compositional bias: basic and acidic residues.

The protein belongs to the eIF-3 subunit F family. As to quaternary structure, component of the eukaryotic translation initiation factor 3 (eIF-3) complex.

It localises to the cytoplasm. Its function is as follows. Component of the eukaryotic translation initiation factor 3 (eIF-3) complex, which is involved in protein synthesis of a specialized repertoire of mRNAs and, together with other initiation factors, stimulates binding of mRNA and methionyl-tRNAi to the 40S ribosome. The eIF-3 complex specifically targets and initiates translation of a subset of mRNAs involved in cell proliferation. This Aspergillus fumigatus (strain CBS 144.89 / FGSC A1163 / CEA10) (Neosartorya fumigata) protein is Eukaryotic translation initiation factor 3 subunit F.